The sequence spans 46 residues: DNA-directed RNA polymerase subunit Rpo12 (46 aa).

Positions 8, 23, and 26 each coordinate Zn(2+).

Belongs to the archaeal Rpo12/eukaryotic RPC10 RNA polymerase subunit family. Part of the RNA polymerase complex. Zn(2+) serves as cofactor.

It is found in the cytoplasm. The enzyme catalyses RNA(n) + a ribonucleoside 5'-triphosphate = RNA(n+1) + diphosphate. In terms of biological role, DNA-dependent RNA polymerase (RNAP) catalyzes the transcription of DNA into RNA using the four ribonucleoside triphosphates as substrates. This Archaeoglobus fulgidus (strain ATCC 49558 / DSM 4304 / JCM 9628 / NBRC 100126 / VC-16) protein is DNA-directed RNA polymerase subunit Rpo12.